A 373-amino-acid chain; its full sequence is UDP-N-acetylglucosamine--N-acetylmuramyl-(pentapeptide) pyrophosphoryl-undecaprenol N-acetylglucosamine transferase (373 aa).

Residues 14 to 16, Asn128, Arg165, Ser199, and Gln295 each bind UDP-N-acetyl-alpha-D-glucosamine; that span reads TAG.

Belongs to the glycosyltransferase 28 family. MurG subfamily.

It localises to the cell membrane. The enzyme catalyses di-trans,octa-cis-undecaprenyl diphospho-N-acetyl-alpha-D-muramoyl-L-alanyl-D-glutamyl-meso-2,6-diaminopimeloyl-D-alanyl-D-alanine + UDP-N-acetyl-alpha-D-glucosamine = di-trans,octa-cis-undecaprenyl diphospho-[N-acetyl-alpha-D-glucosaminyl-(1-&gt;4)]-N-acetyl-alpha-D-muramoyl-L-alanyl-D-glutamyl-meso-2,6-diaminopimeloyl-D-alanyl-D-alanine + UDP + H(+). It functions in the pathway cell wall biogenesis; peptidoglycan biosynthesis. Its function is as follows. Cell wall formation. Catalyzes the transfer of a GlcNAc subunit on undecaprenyl-pyrophosphoryl-MurNAc-pentapeptide (lipid intermediate I) to form undecaprenyl-pyrophosphoryl-MurNAc-(pentapeptide)GlcNAc (lipid intermediate II). In Mycobacterium sp. (strain JLS), this protein is UDP-N-acetylglucosamine--N-acetylmuramyl-(pentapeptide) pyrophosphoryl-undecaprenol N-acetylglucosamine transferase.